Here is a 110-residue protein sequence, read N- to C-terminus: Large ribosomal subunit protein uL22 (110 aa).

Belongs to the universal ribosomal protein uL22 family. Part of the 50S ribosomal subunit.

Its function is as follows. This protein binds specifically to 23S rRNA; its binding is stimulated by other ribosomal proteins, e.g. L4, L17, and L20. It is important during the early stages of 50S assembly. It makes multiple contacts with different domains of the 23S rRNA in the assembled 50S subunit and ribosome. The globular domain of the protein is located near the polypeptide exit tunnel on the outside of the subunit, while an extended beta-hairpin is found that lines the wall of the exit tunnel in the center of the 70S ribosome. The chain is Large ribosomal subunit protein uL22 from Enterobacter sp. (strain 638).